Here is a 155-residue protein sequence, read N- to C-terminus: RNA pyrophosphohydrolase (155 aa).

Residues K5–A147 form the Nudix hydrolase domain. Residues G42–G63 carry the Nudix box motif.

It belongs to the Nudix hydrolase family. RppH subfamily. It depends on a divalent metal cation as a cofactor.

Functionally, accelerates the degradation of transcripts by removing pyrophosphate from the 5'-end of triphosphorylated RNA, leading to a more labile monophosphorylated state that can stimulate subsequent ribonuclease cleavage. The sequence is that of RNA pyrophosphohydrolase from Helicobacter pylori (strain ATCC 700392 / 26695) (Campylobacter pylori).